A 114-amino-acid chain; its full sequence is Ig heavy chain V region (114 aa).

The region spanning 1 to 106 is the Ig-like domain; sequence EVQLQQSGAE…AVRVISRYFD (106 aa).

In Mus musculus (Mouse), this protein is Ig heavy chain V region.